Consider the following 619-residue polypeptide: Sodium-dependent dopamine transporter (619 aa).

The Cytoplasmic segment spans residues M1–E56. Residues A57–G95 traverse the membrane as a discontinuously helical segment. Na(+) is bound by residues G75, A77, V78, D79, and N82. Residue D79 participates in dopamine binding. Transmembrane regions (helical) follow at residues G96–G127 and A128–F171. 2 residues coordinate dopamine: S149 and G153. At T172–P235 the chain is on the extracellular side. The cysteines at positions 180 and 189 are disulfide-linked. N-linked (GlcNAc...) asparagine glycans are attached at residues N181, N188, N196, and N204. A run of 2 helical transmembrane segments spans residues R236–W255 and K256–L286. The Extracellular portion of the chain corresponds to P287–C305. Residues E306–Y334 form a discontinuously helical membrane-spanning segment. Q316 contacts chloride. F319 lines the dopamine pocket. Residues S320 and N352 each contribute to the Na(+) site. S320 serves as a coordination point for chloride. Residues N335 to N375 traverse the membrane as a helical segment. Chloride is bound at residue S356. Over V376–T399 the chain is Extracellular. Helical transmembrane passes span L400 to H441, R442 to N465, and G466 to Y498. The Na(+) site is built by L417, D420, and S421. Positions 421 and 422 each coordinate dopamine. Residues G499–P515 lie on the Cytoplasmic side of the membrane. Residues N516–T541 traverse the membrane as a helical segment. Topologically, residues F542 to F552 are extracellular. The chain crosses the membrane as a helical span at residues P553–L582. Positions G560–K589 are interaction with TGFB1I1. The Cytoplasmic portion of the chain corresponds to P583 to L619.

It belongs to the sodium:neurotransmitter symporter (SNF) (TC 2.A.22) family. SLC6A3 subfamily. In terms of assembly, monomer. Homooligomer; disulfide-linked. Interacts with PRKCABP and TGFB1I1. Interacts (via N-terminus) with SYNGR3 (via N-terminus). Interacts with SLC18A2. Interacts with TOR1A (ATP-bound); TOR1A regulates SLC6A3 subcellular location. Interacts with alpha-synuclein/SNCA. Interacts with SEPTIN4. As to expression, brain. Expressed in the substantia nigra and ventral tegmental area, regions that contain dopaminergic cell bodies.

The protein resides in the cell membrane. Its subcellular location is the cell projection. It localises to the neuron projection. The protein localises to the axon. It catalyses the reaction dopamine(out) + chloride(out) + Na(+)(out) = dopamine(in) + chloride(in) + Na(+)(in). The enzyme catalyses (R)-noradrenaline(out) + chloride(out) + Na(+)(out) = (R)-noradrenaline(in) + chloride(in) + Na(+)(in). It carries out the reaction dopamine(out) + chloride(out) + 2 Na(+)(out) = dopamine(in) + chloride(in) + 2 Na(+)(in). Inhibited by mazindol, cocaine, desipramine, GBR 12783 dihydrochloride, GBR 12909 dihydrochloride and nomifensine. Inhibited by zinc ions. Its function is as follows. Mediates sodium- and chloride-dependent transport of dopamine. Also mediates sodium- and chloride-dependent transport of norepinephrine (also known as noradrenaline). Regulator of light-dependent retinal hyaloid vessel regression, downstream of OPN5 signaling. The protein is Sodium-dependent dopamine transporter (Slc6a3) of Rattus norvegicus (Rat).